The primary structure comprises 219 residues: Octanoyltransferase (219 aa).

The region spanning 32-207 is the BPL/LPL catalytic domain; sequence ENSQDEIWIV…TLSQELGLDK (176 aa). Substrate contacts are provided by residues 71–78, 138–140, and 151–153; these read RGGQVTYH, SLG, and GLA. Residue C169 is the Acyl-thioester intermediate of the active site.

The protein belongs to the LipB family.

It localises to the cytoplasm. The enzyme catalyses octanoyl-[ACP] + L-lysyl-[protein] = N(6)-octanoyl-L-lysyl-[protein] + holo-[ACP] + H(+). It participates in protein modification; protein lipoylation via endogenous pathway; protein N(6)-(lipoyl)lysine from octanoyl-[acyl-carrier-protein]: step 1/2. Functionally, catalyzes the transfer of endogenously produced octanoic acid from octanoyl-acyl-carrier-protein onto the lipoyl domains of lipoate-dependent enzymes. Lipoyl-ACP can also act as a substrate although octanoyl-ACP is likely to be the physiological substrate. This Shewanella halifaxensis (strain HAW-EB4) protein is Octanoyltransferase.